The sequence spans 549 residues: Glucose-6-phosphate isomerase (549 aa).

Residues Lys-80, Lys-228, and Lys-234 each carry the N6-acetyllysine modification. Glu-355 functions as the Proton donor in the catalytic mechanism. Residues His-386 and Lys-514 contribute to the active site.

It belongs to the GPI family.

It localises to the cytoplasm. It carries out the reaction alpha-D-glucose 6-phosphate = beta-D-fructose 6-phosphate. It functions in the pathway carbohydrate biosynthesis; gluconeogenesis. The protein operates within carbohydrate degradation; glycolysis; D-glyceraldehyde 3-phosphate and glycerone phosphate from D-glucose: step 2/4. Its function is as follows. Catalyzes the reversible isomerization of glucose-6-phosphate to fructose-6-phosphate. The sequence is that of Glucose-6-phosphate isomerase from Escherichia coli O127:H6 (strain E2348/69 / EPEC).